Reading from the N-terminus, the 410-residue chain is Cytochrome P450 monooxygenase mpsF (410 aa).

Cys355 is a binding site for heme.

The protein belongs to the cytochrome P450 family. Heme is required as a cofactor.

It functions in the pathway secondary metabolite biosynthesis. Functionally, cytochrome P450 monooxygenase; part of the gene cluster that mediates the biosynthesis of macrophasetins, 3-decalinoyltetramic acids (DTAs) which feature a tetramate (pyrrolidine-2,4-dione) unit connected to a decalin fragment and that have potent bioactivities. The PKS-NRPS mpsA together with its associated enoylreductase partner mpsG incorporate one unit of acetyl-CoA, seven units of malonyl-CoA, and one unit of L-alanine to assemble the linear tetramic acid intermediate corresponding to the backbone of macrophasetins. Without the Diels-Alderase mpsD, the mpsA/G product can undergo the non-enzymatic intramolecular Diels-Alder (IMDA) reaction to generate both macrophasetin A and macrophasetin B. Catalyzed by mpsD, the linear tetramic acid intermediate is thoroughly converted to macrophasetin A via the endo-IMDA reaction in a regioselective and stereoselective manner. Finally, the cytochrome P450 monooxygenase mpsF catalyzes the hydroxylation at C20 to yield the end product macrophasetin C. This chain is Cytochrome P450 monooxygenase mpsF, found in Macrophomina phaseolina (strain MS6) (Charcoal rot fungus).